We begin with the raw amino-acid sequence, 170 residues long: Flavodoxin (170 aa).

Positions 4-165 (IGLFYGTQTG…RVKTWVSEIK (162 aa)) constitute a Flavodoxin-like domain.

Belongs to the flavodoxin family. It depends on FMN as a cofactor.

In terms of biological role, low-potential electron donor to a number of redox enzymes. This chain is Flavodoxin (isiB), found in Synechocystis sp. (strain ATCC 27184 / PCC 6803 / Kazusa).